Here is a 504-residue protein sequence, read N- to C-terminus: Activin receptor type-1-like (504 aa).

Positions M1 to T20 are cleaved as a signal peptide. Residues K21 to P121 are Extracellular-facing. Residue N34 is glycosylated (N-linked (GlcNAc...) asparagine). Cystine bridges form between C35–C52, C37–C42, and C47–C70. Residues N74 to L77 form a mediates specificity for BMP ligand region. 2 disulfides stabilise this stretch: C78-C90 and C91-C96. N-linked (GlcNAc...) asparagine glycosylation is present at N99. The helical transmembrane segment at L122–W142 threads the bilayer. Topologically, residues R143–H504 are cytoplasmic. A phosphoserine mark is found at S156, S161, and S162. A GS domain is found at S173–Q202. The region spanning V203–H504 is the Protein kinase domain. ATP contacts are provided by residues V209–V217 and K230. The active-site Proton acceptor is the D331.

This sequence belongs to the protein kinase superfamily. TKL Ser/Thr protein kinase family. TGFB receptor subfamily. Interacts with TSC22D1/TSC-22. Mg(2+) is required as a cofactor. It depends on Mn(2+) as a cofactor. As to expression, urogenital ridge, testis, ovary, brain and lung. In lung, found exclusively in pulmonary vessels of all sizes. Also expressed in aorta, vena cava and certain blood vessels of kidney, spleen, heart and intestine. For most blood vessels, a higher level of expression is found in endothelium than in adjacent smooth muscle.

It is found in the cell membrane. The catalysed reaction is L-threonyl-[receptor-protein] + ATP = O-phospho-L-threonyl-[receptor-protein] + ADP + H(+). It catalyses the reaction L-seryl-[receptor-protein] + ATP = O-phospho-L-seryl-[receptor-protein] + ADP + H(+). Its function is as follows. Type I receptor for TGF-beta family ligands BMP9/GDF2 and BMP10 and important regulator of normal blood vessel development. On ligand binding, forms a receptor complex consisting of two type II and two type I transmembrane serine/threonine kinases. Type II receptors phosphorylate and activate type I receptors which autophosphorylate, then bind and activate SMAD transcriptional regulators. May bind activin as well. The polypeptide is Activin receptor type-1-like (Acvrl1) (Rattus norvegicus (Rat)).